The sequence spans 786 residues: DNA repair and recombination protein RAD54-like (786 aa).

The required for chromatin remodeling, strand pairing activities and coupling of ATPase activity stretch occupies residues 2-9 (RRSLAPSQ). Threonine 22 bears the Phosphothreonine mark. The Helicase ATP-binding domain occupies 165–340 (EGKRGSFNGC…FSLVNFVNPE (176 aa)). An ATP-binding site is contributed by 178-185 (DEMGLGKT). The DEGH box motif lies at 291–294 (DEGH). The region spanning 497-654 (LLDFMLAAIR…NNESVEKHFT (158 aa)) is the Helicase C-terminal domain. The tract at residues 738 to 786 (EAKPAATTTDEDEELSDSKRKAKKTLASDDDDDEDFVLNCSSGEEFSGF) is disordered. Over residues 776–786 (NCSSGEEFSGF) the composition is skewed to polar residues.

It belongs to the SNF2/RAD54 helicase family. As to quaternary structure, interacts (via N-terminus) with spn-A/Rad51.

The protein localises to the nucleus. In terms of biological role, involved in mitotic DNA repair and meiotic recombination. Functions in the recombinational DNA repair pathway. Essential for interhomolog gene conversion (GC), but may have a less important role in intersister GC than spn-A/Rad51. In the presence of DNA, spn-A/Rad51 enhances the ATPase activity of okr/Rad54. The polypeptide is DNA repair and recombination protein RAD54-like (Drosophila grimshawi (Hawaiian fruit fly)).